A 20-amino-acid polypeptide reads, in one-letter code: Trypsin inhibitor (20 aa).

The tract at residues A1–D20 is disordered.

Hemolymph.

The protein resides in the secreted. Its subcellular location is the extracellular space. Its function is as follows. Inhibits trypsin stoichiometrically. Also inhibits chymotrypsin very weakly. The polypeptide is Trypsin inhibitor (Mythimna unipuncta (Armyworm moth)).